A 217-amino-acid chain; its full sequence is UPF0502 protein ESA_02280 (217 aa).

This sequence belongs to the UPF0502 family.

The polypeptide is UPF0502 protein ESA_02280 (Cronobacter sakazakii (strain ATCC BAA-894) (Enterobacter sakazakii)).